We begin with the raw amino-acid sequence, 989 residues long: ATP-dependent 6-phosphofructokinase subunit alpha (989 aa).

Positions 1–585 (MPEPSISDLS…SYENFLSVSK (585 aa)) are N-terminal catalytic PFK domain 1. ATP-binding positions include Gly220, 283 to 284 (RC), and 313 to 316 (GDGS). Asp314 lines the Mg(2+) pocket. Residues 359 to 361 (SID), Arg396, 403 to 405 (MGR), Glu460, Arg487, and 493 to 496 (HVQR) contribute to the beta-D-fructose 6-phosphate site. The Proton acceptor role is filled by Asp361. The interval 586–599 (YDDGSYLVPESSRL) is interdomain linker. Residues 600 to 989 (NIAIIHVGAP…LSGRLSIRTT (390 aa)) are C-terminal regulatory PFK domain 2. Beta-D-fructose 2,6-bisphosphate is bound by residues Arg670, 727–731 (TVSNN), Arg765, 772–774 (QGG), Glu832, Arg858, 864–867 (HVQQ), and Arg963.

The protein belongs to the phosphofructokinase type A (PFKA) family. ATP-dependent PFK group I subfamily. Eukaryotic two domain clade 'E' sub-subfamily. As to quaternary structure, heterododecamer of 4 alpha, 4 beta and 4 gamma chains. Mg(2+) is required as a cofactor.

The protein localises to the cytoplasm. It catalyses the reaction beta-D-fructose 6-phosphate + ATP = beta-D-fructose 1,6-bisphosphate + ADP + H(+). The protein operates within carbohydrate degradation; glycolysis; D-glyceraldehyde 3-phosphate and glycerone phosphate from D-glucose: step 3/4. With respect to regulation, allosterically activated by ADP, AMP, or fructose 2,6-bisphosphate, and allosterically inhibited by ATP or citrate. Catalyzes the phosphorylation of D-fructose 6-phosphate to fructose 1,6-bisphosphate by ATP, the first committing step of glycolysis. The chain is ATP-dependent 6-phosphofructokinase subunit alpha (PFK1) from Komagataella pastoris (Yeast).